Consider the following 282-residue polypeptide: Shikimate dehydrogenase (NADP(+)) (282 aa).

Residues 18 to 20 (SRS) and Thr65 contribute to the shikimate site. Lys69 serves as the catalytic Proton acceptor. 2 residues coordinate shikimate: Asn90 and Asp106. NADP(+) is bound by residues 134–138 (GAGGA), 158–163 (NRTAAR), and Ile223. Tyr225 serves as a coordination point for shikimate. Gly246 lines the NADP(+) pocket.

Belongs to the shikimate dehydrogenase family. In terms of assembly, homodimer.

The enzyme catalyses shikimate + NADP(+) = 3-dehydroshikimate + NADPH + H(+). Its pathway is metabolic intermediate biosynthesis; chorismate biosynthesis; chorismate from D-erythrose 4-phosphate and phosphoenolpyruvate: step 4/7. Its function is as follows. Involved in the biosynthesis of the chorismate, which leads to the biosynthesis of aromatic amino acids. Catalyzes the reversible NADPH linked reduction of 3-dehydroshikimate (DHSA) to yield shikimate (SA). This is Shikimate dehydrogenase (NADP(+)) from Methylobacterium radiotolerans (strain ATCC 27329 / DSM 1819 / JCM 2831 / NBRC 15690 / NCIMB 10815 / 0-1).